Reading from the N-terminus, the 147-residue chain is Cell division protein SepF 1 (147 aa).

This sequence belongs to the SepF family. Homodimer. Interacts with FtsZ.

The protein resides in the cytoplasm. Functionally, cell division protein that is part of the divisome complex and is recruited early to the Z-ring. Probably stimulates Z-ring formation, perhaps through the cross-linking of FtsZ protofilaments. Its function overlaps with FtsA. The protein is Cell division protein SepF 1 of Desulforamulus reducens (strain ATCC BAA-1160 / DSM 100696 / MI-1) (Desulfotomaculum reducens).